We begin with the raw amino-acid sequence, 326 residues long: 4-hydroxythreonine-4-phosphate dehydrogenase (326 aa).

Residues His-132 and Thr-133 each coordinate substrate. 3 residues coordinate a divalent metal cation: His-163, His-208, and His-263. Substrate-binding residues include Lys-271, Asn-280, and Arg-289.

Belongs to the PdxA family. In terms of assembly, homodimer. The cofactor is Zn(2+). Mg(2+) serves as cofactor. It depends on Co(2+) as a cofactor.

It localises to the cytoplasm. The enzyme catalyses 4-(phosphooxy)-L-threonine + NAD(+) = 3-amino-2-oxopropyl phosphate + CO2 + NADH. The protein operates within cofactor biosynthesis; pyridoxine 5'-phosphate biosynthesis; pyridoxine 5'-phosphate from D-erythrose 4-phosphate: step 4/5. Its function is as follows. Catalyzes the NAD(P)-dependent oxidation of 4-(phosphooxy)-L-threonine (HTP) into 2-amino-3-oxo-4-(phosphooxy)butyric acid which spontaneously decarboxylates to form 3-amino-2-oxopropyl phosphate (AHAP). The chain is 4-hydroxythreonine-4-phosphate dehydrogenase from Roseobacter denitrificans (strain ATCC 33942 / OCh 114) (Erythrobacter sp. (strain OCh 114)).